The sequence spans 860 residues: Leucine--tRNA ligase (860 aa).

A 'HIGH' region motif is present at residues 42 to 52 (PYPSGRLHMGH). The short motif at 619–623 (KMSKS) is the 'KMSKS' region element. Lys622 lines the ATP pocket.

Belongs to the class-I aminoacyl-tRNA synthetase family.

It is found in the cytoplasm. The enzyme catalyses tRNA(Leu) + L-leucine + ATP = L-leucyl-tRNA(Leu) + AMP + diphosphate. The polypeptide is Leucine--tRNA ligase (Salmonella paratyphi A (strain ATCC 9150 / SARB42)).